The following is a 282-amino-acid chain: 4-hydroxybenzoate octaprenyltransferase (282 aa).

The next 9 membrane-spanning stretches (helical) occupy residues Ile-17 to Phe-37, Ile-40 to Ile-60, Ala-90 to Ile-110, Phe-113 to Phe-133, Ala-135 to Ser-155, Phe-163 to Met-183, Leu-207 to Lys-227, Cys-231 to Ile-251, and Ala-262 to Ile-282.

Belongs to the UbiA prenyltransferase family. Requires Mg(2+) as cofactor.

The protein localises to the cell inner membrane. The catalysed reaction is all-trans-octaprenyl diphosphate + 4-hydroxybenzoate = 4-hydroxy-3-(all-trans-octaprenyl)benzoate + diphosphate. It functions in the pathway cofactor biosynthesis; ubiquinone biosynthesis. Its function is as follows. Catalyzes the prenylation of para-hydroxybenzoate (PHB) with an all-trans polyprenyl group. Mediates the second step in the final reaction sequence of ubiquinone-8 (UQ-8) biosynthesis, which is the condensation of the polyisoprenoid side chain with PHB, generating the first membrane-bound Q intermediate 3-octaprenyl-4-hydroxybenzoate. This is 4-hydroxybenzoate octaprenyltransferase from Legionella pneumophila (strain Lens).